The chain runs to 162 residues: NADH-quinone oxidoreductase subunit C (162 aa).

Belongs to the complex I 30 kDa subunit family. As to quaternary structure, NDH-1 is composed of 14 different subunits. Subunits NuoB, C, D, E, F, and G constitute the peripheral sector of the complex.

Its subcellular location is the cell inner membrane. It carries out the reaction a quinone + NADH + 5 H(+)(in) = a quinol + NAD(+) + 4 H(+)(out). Its function is as follows. NDH-1 shuttles electrons from NADH, via FMN and iron-sulfur (Fe-S) centers, to quinones in the respiratory chain. The immediate electron acceptor for the enzyme in this species is believed to be ubiquinone. Couples the redox reaction to proton translocation (for every two electrons transferred, four hydrogen ions are translocated across the cytoplasmic membrane), and thus conserves the redox energy in a proton gradient. In Geobacter metallireducens (strain ATCC 53774 / DSM 7210 / GS-15), this protein is NADH-quinone oxidoreductase subunit C.